We begin with the raw amino-acid sequence, 424 residues long: MAKMIPSLVSLILIGLVAIASAAVIFEERFDDGWENRWVKSEWKKDDNTAGEWKHTAGNWSGDANDKGIQTSEDYRFYAISAEFPEFSNKDKTLVFQFSVKHEQKLDCGGGYMKLLSGDVDQKKFGGDTPYSIMFGPDICGYSTKKVHAILTYNEANHLIKKDVPCETDQLTHVYTFILRPDATYSILIDNVEKQTGSLYSDWDLLPPKKIKDPSAKKPEDWDEQEYISDPEDKKPDGYDDIPKEIPDTDSKKPEDWDDEEDGEWTAPTIPNPEYMGEWKPKQIKNPNYKGKWEAPLIDNPDFKDDPELYVFPKLKYVGLELWQVKSGSLFDNVLICDDPDYAKKLADETWGKLKDAEKAAFDEAEKKNEEEESKDAPAESDAEDEPEDDEGGDDSDSESKAEETKSVDSEETSEKDATAHDEL.

An N-terminal signal peptide occupies residues 1 to 22 (MAKMIPSLVSLILIGLVAIASA). N-linked (GlcNAc...) asparagine glycosylation occurs at N59. C108 and C140 form a disulfide bridge. An alpha-D-glucoside-binding residues include Y112, K114, Y131, and D138. 7 tandem repeats follow at residues 194-205 (KQTGSLYSDWDL), 213-224 (DPSAKKPEDWDE), 230-241 (DPEDKKPDGYDD), 248-259 (DTDSKKPEDWDD), 263-273 (GEWTAPTIPNP), 277-287 (GEWKPKQIKNP), and 291-301 (GKWEAPLIDNP). A 4 X approximate repeats region spans residues 194 to 259 (KQTGSLYSDW…DSKKPEDWDD (66 aa)). The segment covering 210-220 (KIKDPSAKKPE) has biased composition (basic and acidic residues). The segment at 210–279 (KIKDPSAKKP…IPNPEYMGEW (70 aa)) is disordered. The segment covering 221-230 (DWDEQEYISD) has biased composition (acidic residues). Basic and acidic residues predominate over residues 231 to 255 (PEDKKPDGYDDIPKEIPDTDSKKPE). Residues 263–301 (GEWTAPTIPNPEYMGEWKPKQIKNPNYKGKWEAPLIDNP) are 3 X approximate repeats. E321 contacts an alpha-D-glucoside. The segment covering 362 to 378 (FDEAEKKNEEEESKDAP) has biased composition (basic and acidic residues). Residues 362–424 (FDEAEKKNEE…EKDATAHDEL (63 aa)) form a disordered region. A compositionally biased stretch (acidic residues) spans 379-397 (AESDAEDEPEDDEGGDDSD). Phosphoserine is present on residues S381 and S396. Residues 398–424 (SESKAEETKSVDSEETSEKDATAHDEL) show a composition bias toward basic and acidic residues. Positions 421-424 (HDEL) match the Prevents secretion from ER motif.

Belongs to the calreticulin family.

The protein resides in the endoplasmic reticulum lumen. Molecular calcium-binding chaperone promoting folding, oligomeric assembly and quality control in the ER via the calreticulin/calnexin cycle. This lectin may interact transiently with almost all of the monoglucosylated glycoproteins that are synthesized in the ER. In Arabidopsis thaliana (Mouse-ear cress), this protein is Calreticulin-2 (CRT2).